The following is a 460-amino-acid chain: Ribulose bisphosphate carboxylase large chain (460 aa).

An N6,N6,N6-trimethyllysine modification is found at Lys-4. Residues Asn-113 and Thr-163 each contribute to the substrate site. The active-site Proton acceptor is Lys-165. Lys-167 lines the substrate pocket. Residues Lys-191, Asp-193, and Glu-194 each contribute to the Mg(2+) site. Position 191 is an N6-carboxylysine (Lys-191). The Proton acceptor role is filled by His-284. Residues Arg-285, His-317, and Ser-369 each contribute to the substrate site.

Belongs to the RuBisCO large chain family. Type I subfamily. As to quaternary structure, heterohexadecamer of 8 large chains and 8 small chains. It depends on Mg(2+) as a cofactor.

It localises to the plastid. The protein resides in the chloroplast. The enzyme catalyses 2 (2R)-3-phosphoglycerate + 2 H(+) = D-ribulose 1,5-bisphosphate + CO2 + H2O. It carries out the reaction D-ribulose 1,5-bisphosphate + O2 = 2-phosphoglycolate + (2R)-3-phosphoglycerate + 2 H(+). In terms of biological role, ruBisCO catalyzes two reactions: the carboxylation of D-ribulose 1,5-bisphosphate, the primary event in carbon dioxide fixation, as well as the oxidative fragmentation of the pentose substrate in the photorespiration process. Both reactions occur simultaneously and in competition at the same active site. This chain is Ribulose bisphosphate carboxylase large chain, found in Cunninghamia lanceolata (China fir).